The primary structure comprises 301 residues: Probable alpha-L-glutamate ligase (301 aa).

The ATP-grasp domain occupies 104 to 287 (LQLLSRRGIG…VAGIIIEHLE (184 aa)). Residues lysine 141, 178 to 179 (EY), aspartate 187, and 211 to 213 (RSN) each bind ATP. Positions 248, 260, and 262 each coordinate Mg(2+). Residues aspartate 248, glutamate 260, and asparagine 262 each coordinate Mn(2+).

Belongs to the RimK family. Mg(2+) serves as cofactor. Requires Mn(2+) as cofactor.

The protein is Probable alpha-L-glutamate ligase of Pseudomonas fluorescens (strain SBW25).